Consider the following 332-residue polypeptide: L-lactate dehydrogenase A chain (332 aa).

Residues glycine 29 to lysine 57 and arginine 99 each bind NAD(+). Substrate is bound by residues arginine 106, asparagine 138, and arginine 169. Asparagine 138 lines the NAD(+) pocket. Residue histidine 193 is the Proton acceptor of the active site. Threonine 248 contacts substrate.

This sequence belongs to the LDH/MDH superfamily. LDH family. As to quaternary structure, homotetramer.

It is found in the cytoplasm. It catalyses the reaction (S)-lactate + NAD(+) = pyruvate + NADH + H(+). It functions in the pathway fermentation; pyruvate fermentation to lactate; (S)-lactate from pyruvate: step 1/1. Its function is as follows. Interconverts simultaneously and stereospecifically pyruvate and lactate with concomitant interconversion of NADH and NAD(+). This chain is L-lactate dehydrogenase A chain (ldha), found in Lycodichthys dearborni (Antarctic eelpout).